The primary structure comprises 375 residues: Chaperone protein DnaJ (375 aa).

The 65-residue stretch at 5-69 folds into the J domain; it reads DYYEVLGVGK…QKRAHYDQFG (65 aa). Residues 132–214 form a CR-type zinc finger; that stretch reads GKETTIEIPR…CGGTGKVKKR (83 aa). Cys145, Cys148, Cys162, Cys165, Cys188, Cys191, Cys202, and Cys205 together coordinate Zn(2+). CXXCXGXG motif repeat units lie at residues 145–152, 162–169, 188–195, and 202–209; these read CETCSGSG, CSHCGGSG, CHYCNGTG, and CSTCGGTG.

It belongs to the DnaJ family. Homodimer. Zn(2+) is required as a cofactor.

It localises to the cytoplasm. Functionally, participates actively in the response to hyperosmotic and heat shock by preventing the aggregation of stress-denatured proteins and by disaggregating proteins, also in an autonomous, DnaK-independent fashion. Unfolded proteins bind initially to DnaJ; upon interaction with the DnaJ-bound protein, DnaK hydrolyzes its bound ATP, resulting in the formation of a stable complex. GrpE releases ADP from DnaK; ATP binding to DnaK triggers the release of the substrate protein, thus completing the reaction cycle. Several rounds of ATP-dependent interactions between DnaJ, DnaK and GrpE are required for fully efficient folding. Also involved, together with DnaK and GrpE, in the DNA replication of plasmids through activation of initiation proteins. In Bacillus licheniformis (strain ATCC 14580 / DSM 13 / JCM 2505 / CCUG 7422 / NBRC 12200 / NCIMB 9375 / NCTC 10341 / NRRL NRS-1264 / Gibson 46), this protein is Chaperone protein DnaJ.